A 400-amino-acid polypeptide reads, in one-letter code: Acetate kinase (400 aa).

Position 9 (asparagine 9) interacts with Mg(2+). Residue lysine 16 participates in ATP binding. Substrate is bound at residue arginine 90. Residue aspartate 147 is the Proton donor/acceptor of the active site. ATP contacts are provided by residues histidine 207 to glycine 211, aspartate 282 to arginine 284, and glycine 330 to asparagine 334. Glutamate 385 contributes to the Mg(2+) binding site.

It belongs to the acetokinase family. Homodimer. Requires Mg(2+) as cofactor. The cofactor is Mn(2+).

Its subcellular location is the cytoplasm. The enzyme catalyses acetate + ATP = acetyl phosphate + ADP. Its pathway is metabolic intermediate biosynthesis; acetyl-CoA biosynthesis; acetyl-CoA from acetate: step 1/2. Functionally, catalyzes the formation of acetyl phosphate from acetate and ATP. Can also catalyze the reverse reaction. In Staphylococcus aureus (strain JH1), this protein is Acetate kinase.